The primary structure comprises 424 residues: MASSNLIKQLQERGLVAQVTDEEALAERLAQGPIALYCGFDPTADSLHLGHLVPLLCLKRFQQAGHKPVALVGGATGLIGDPSFKAAERKLNTEETVQEWVDKIRKQVAPFLDFDCGENSAIAANNYDWFGNMNVLTFLRDIGKHFSVNQMINKEAVKQRLNREDQGISFTEFSYNLLQGYDFACLNKLYGVSLQIGGSDQWGNITSGIDLTRRLHQNQVFGLTVPLITKADGTKFGKTEGGAVWLDPKKTSPYKFYQFWINTADADVYRFLKFFTFMSIEEINALEEEDKNSGKAPRAQYVLAEQVTRLVHGEEGLQAAKRITECLFSGSLSALSEADFEQLAQDGVPMVEMEKGADLMQALVDSELQPSRGQARKTIASNAVTINGEKQSDPEYFFKEEDRLFGRFTLLRRGKKNYCLICWK.

L-tyrosine is bound at residue tyrosine 37. The 'HIGH' region signature appears at 42-51 (PTADSLHLGH). Lysine 144 is modified (N6-acetyllysine). The L-tyrosine site is built by tyrosine 175 and glutamine 179. A 'KMSKS' region motif is present at residues 235 to 239 (KFGKT). Lysine 238 is a binding site for ATP. One can recognise an S4 RNA-binding domain in the interval 357-414 (ADLMQALVDSELQPSRGQARKTIASNAVTINGEKQSDPEYFFKEEDRLFGRFTLLRRG).

This sequence belongs to the class-I aminoacyl-tRNA synthetase family. TyrS type 1 subfamily. As to quaternary structure, homodimer.

It is found in the cytoplasm. The catalysed reaction is tRNA(Tyr) + L-tyrosine + ATP = L-tyrosyl-tRNA(Tyr) + AMP + diphosphate + H(+). Its function is as follows. Catalyzes the attachment of tyrosine to tRNA(Tyr) in a two-step reaction: tyrosine is first activated by ATP to form Tyr-AMP and then transferred to the acceptor end of tRNA(Tyr). The protein is Tyrosine--tRNA ligase of Escherichia fergusonii (strain ATCC 35469 / DSM 13698 / CCUG 18766 / IAM 14443 / JCM 21226 / LMG 7866 / NBRC 102419 / NCTC 12128 / CDC 0568-73).